A 132-amino-acid chain; its full sequence is Large ribosomal subunit protein eL8 (132 aa).

Lysine 8 is subject to N6-acetyllysine; alternate. Residue lysine 8 forms a Glycyl lysine isopeptide (Lys-Gly) (interchain with G-Cter in SUMO2); alternate linkage. A Glycyl lysine isopeptide (Lys-Gly) (interchain with G-Cter in SUMO2) cross-link involves residue lysine 36. At lysine 128 the chain carries N6-acetyllysine.

The protein belongs to the eukaryotic ribosomal protein eL8 family. In terms of assembly, component of the large ribosomal subunit. Interacts with CRY1. Interacts with DICER1, AGO2, TARBP2, MOV10 and EIF6; they form a large RNA-induced silencing complex (RISC).

The protein resides in the cytoplasm. In terms of biological role, component of the large ribosomal subunit. The ribosome is a large ribonucleoprotein complex responsible for the synthesis of proteins in the cell. The chain is Large ribosomal subunit protein eL8 (RPL7A) from Sus scrofa (Pig).